The primary structure comprises 222 residues: Eukaryotic translation initiation factor 3 subunit K (222 aa).

Positions 46–208 (YDLEANLAVL…KIKTKNITEK (163 aa)) constitute a PCI domain.

It belongs to the eIF-3 subunit K family. In terms of assembly, component of the eukaryotic translation initiation factor 3 (eIF-3) complex. The eIF-3 complex interacts with pix.

It localises to the cytoplasm. Its function is as follows. Component of the eukaryotic translation initiation factor 3 (eIF-3) complex, which is involved in protein synthesis of a specialized repertoire of mRNAs and, together with other initiation factors, stimulates binding of mRNA and methionyl-tRNAi to the 40S ribosome. The eIF-3 complex specifically targets and initiates translation of a subset of mRNAs involved in cell proliferation. The chain is Eukaryotic translation initiation factor 3 subunit K from Drosophila willistoni (Fruit fly).